Reading from the N-terminus, the 209-residue chain is Small ribosomal subunit protein uS4 (209 aa).

Residues 23-46 form a disordered region; sequence SRNPLLKKPHPPGQHGMQRKKKSD. Positions 93–153 constitute an S4 RNA-binding domain; that stretch reads CRLDNMVYRM…EKSKRLQSVK (61 aa).

The protein belongs to the universal ribosomal protein uS4 family. Part of the 30S ribosomal subunit. Contacts protein S5. The interaction surface between S4 and S5 is involved in control of translational fidelity.

Its function is as follows. One of the primary rRNA binding proteins, it binds directly to 16S rRNA where it nucleates assembly of the body of the 30S subunit. With S5 and S12 plays an important role in translational accuracy. This chain is Small ribosomal subunit protein uS4, found in Chlamydia pneumoniae (Chlamydophila pneumoniae).